We begin with the raw amino-acid sequence, 196 residues long: Ribonuclease HII (196 aa).

An RNase H type-2 domain is found at 9–196 (RLVAGVDEVG…KPVRRALGIE (188 aa)). Positions 15, 16, and 107 each coordinate a divalent metal cation.

Belongs to the RNase HII family. Mn(2+) serves as cofactor. Mg(2+) is required as a cofactor.

Its subcellular location is the cytoplasm. The enzyme catalyses Endonucleolytic cleavage to 5'-phosphomonoester.. In terms of biological role, endonuclease that specifically degrades the RNA of RNA-DNA hybrids. The chain is Ribonuclease HII from Aeromonas hydrophila subsp. hydrophila (strain ATCC 7966 / DSM 30187 / BCRC 13018 / CCUG 14551 / JCM 1027 / KCTC 2358 / NCIMB 9240 / NCTC 8049).